A 591-amino-acid chain; its full sequence is CTP synthase 1 (591 aa).

Residue Lys100 is modified to N6-acetyllysine. In terms of domain architecture, Glutamine amidotransferase type-1 spans 300-554 (SIALVGKYTK…LASVGRLSHY (255 aa)). Active-site for GATase activity residues include Cys399, His526, and Glu528. Ser562, Ser568, Ser571, Ser573, Ser574, Ser575, Ser578, and Ser587 each carry phosphoserine. Residues 562-591 (SPRDTYSDRSGSSSPDSEITELKFPSINHD) are disordered. A compositionally biased stretch (low complexity) spans 569–578 (DRSGSSSPDS).

This sequence belongs to the CTP synthase family. In terms of tissue distribution, widely expressed.

The protein localises to the cytoplasm. The protein resides in the cytosol. The catalysed reaction is UTP + L-glutamine + ATP + H2O = CTP + L-glutamate + ADP + phosphate + 2 H(+). It functions in the pathway pyrimidine metabolism; CTP biosynthesis via de novo pathway; CTP from UDP: step 2/2. Its activity is regulated as follows. Activated by GTP and inhibited by CTP. In terms of biological role, this enzyme is involved in the de novo synthesis of CTP, a precursor of DNA, RNA and phospholipids. Catalyzes the ATP-dependent amination of UTP to CTP with either L-glutamine or ammonia as a source of nitrogen. This enzyme and its product, CTP, play a crucial role in the proliferation of activated lymphocytes and therefore in immunity. The protein is CTP synthase 1 of Homo sapiens (Human).